A 296-amino-acid polypeptide reads, in one-letter code: Cbb3-type cytochrome c oxidase subunit CcoP (296 aa).

Residues 1 to 31 are Cytoplasmic-facing; it reads MAQNYKDELSGVETTGHEWDGLRELNNPLPK. A helical transmembrane segment spans residues 32–52; that stretch reads WWLYLFYVCIAWAMVYYVFYP. Over 53–296 the chain is Periplasmic; it reads AWPLGKTYTK…VYVHNLGGGK (244 aa). 2 Cytochrome c domains span residues 108–200 and 207–293; these read FAMA…LSLN and GKVA…HNLG. The heme c site is built by Cys-121, Cys-124, His-125, Met-175, Cys-220, Cys-223, His-224, and Met-270.

The protein belongs to the CcoP / FixP family. Component of the cbb3-type cytochrome c oxidase at least composed of CcoN, CcoO, CcoQ and CcoP. Heme c is required as a cofactor.

The protein localises to the cell inner membrane. It participates in energy metabolism; oxidative phosphorylation. Functionally, C-type cytochrome. Part of the cbb3-type cytochrome c oxidase complex. CcoP subunit is required for transferring electrons from donor cytochrome c via its heme groups to CcoO subunit. From there, electrons are shuttled to the catalytic binuclear center of CcoN subunit where oxygen reduction takes place. The complex also functions as a proton pump. This is Cbb3-type cytochrome c oxidase subunit CcoP from Azospirillum sp. (strain B510).